The primary structure comprises 257 residues: MGRVIRAQRKGAGSVFVSHTKKRKGAPKLRSLDYAERHGYIKGVVKDIIHDPGRGAPLAVVHFRDPYKFKTRKELFIAPEGLYTGQFVYCGKKATLEVGNVMPVGAMPEGTIVCNLEEKMGDRGRLARASGNFATVIGHNPDAKRTRVKLPSGAKKVLPSSNRGMVGIVAGGGRIDKPILKAGRAYHKYKVKRNCWPYVRGVAMNPVEHPHGGGNHQHIGKASTVKRGTSAGRKVGLIAARRTGRIRGGKTDTKKET.

The tract at residues 210-231 (PHGGGNHQHIGKASTVKRGTSA) is disordered.

The protein belongs to the universal ribosomal protein uL2 family.

It localises to the cytoplasm. The sequence is that of Large ribosomal subunit protein uL2 (RpL8) from Mamestra brassicae (Cabbage moth).